A 264-amino-acid polypeptide reads, in one-letter code: Cell division protein FtsQ (264 aa).

A disordered region spans residues 1-24 (MAGPTTAERGDRQQESSGPPPARW). Topologically, residues 1–31 (MAGPTTAERGDRQQESSGPPPARWSGTRRLR) are cytoplasmic. A helical transmembrane segment spans residues 32–52 (ALVVLAALLVLLAGGCAWLLY). The Extracellular portion of the chain corresponds to 53–264 (GSSWLRLERV…VPTAPASSGS (212 aa)). The 70-residue stretch at 57-126 (LRLERVSVSG…HGIGLKVTER (70 aa)) folds into the POTRA domain.

Belongs to the FtsQ/DivIB family. FtsQ subfamily.

Its subcellular location is the cell membrane. Its function is as follows. Essential cell division protein. The polypeptide is Cell division protein FtsQ (Streptomyces collinus).